A 146-amino-acid chain; its full sequence is Core protein OPG114 (146 aa).

This sequence belongs to the orthopoxvirus OPG114 family. As to quaternary structure, part of a complex composed of the kinase OPG054, OPG092, OPG100, OPG114, OPG115, OPG142 and OPG157.

It is found in the virion. Late protein which is part of a large complex required for early virion morphogenesis. This complex participates in the formation of virosomes and the incorporation of virosomal contents into nascent immature virions. The sequence is that of Core protein OPG114 (OPG114) from Monkeypox virus.